The primary structure comprises 376 residues: dTDP-4-amino-4,6-dideoxygalactose transaminase (376 aa).

N6-(pyridoxal phosphate)lysine is present on Lys181.

It belongs to the DegT/DnrJ/EryC1 family. As to quaternary structure, homotetramer. Pyridoxal 5'-phosphate is required as a cofactor.

It carries out the reaction dTDP-4-amino-4,6-dideoxy-alpha-D-galactose + 2-oxoglutarate = dTDP-4-dehydro-6-deoxy-alpha-D-glucose + L-glutamate. The protein operates within bacterial outer membrane biogenesis; enterobacterial common antigen biosynthesis. Its function is as follows. Catalyzes the synthesis of dTDP-4-amino-4,6-dideoxy-D-galactose (dTDP-Fuc4N) from dTDP-4-keto-6-deoxy-D-glucose (dTDP-D-Glc4O) and L-glutamate. The protein is dTDP-4-amino-4,6-dideoxygalactose transaminase of Escherichia coli (strain K12).